The following is an 863-amino-acid chain: DNA replication licensing factor MCM4 (863 aa).

A compositionally biased stretch (low complexity) spans 1 to 10 (MSSPASTPSR). Disordered regions lie at residues 1-60 (MSSP…VDLQ) and 91-126 (TYGTPSSRVEGTPRSGVRGTPVRQRPDLGSAQKGLQ). The residue at position 2 (Ser2) is an N-acetylserine. Ser6 carries the post-translational modification Phosphoserine; by CDC7. Residues Thr7 and Thr19 each carry the phosphothreonine modification. 4 positions are modified to phosphoserine: Ser26, Ser31, Ser32, and Ser34. Thr102 bears the Phosphothreonine mark. The residue at position 105 (Ser105) is a Phosphoserine. Residue Thr110 is modified to Phosphothreonine. Residues Ser120, Ser131, Ser142, and Ser145 each carry the phosphoserine modification. Residue Lys220 is modified to N6-acetyllysine. A Glycyl lysine isopeptide (Lys-Gly) (interchain with G-Cter in SUMO2) cross-link involves residue Lys439. Lys450 is modified (N6-acetyllysine). The MCM domain occupies 458-667 (IYERLASALA…YDRRLAHHLV (210 aa)). ATP-binding residues include Tyr471, Arg497, Lys516, Ser517, Asn618, Arg643, Arg732, and Glu735. Residues 642 to 645 (SRFD) carry the Arginine finger motif. Residue Lys798 forms a Glycyl lysine isopeptide (Lys-Gly) (interchain with G-Cter in SUMO2) linkage. Lys858 bears the N6-acetyllysine mark.

It belongs to the MCM family. As to quaternary structure, component of the MCM2-7 complex. The complex forms a toroidal hexameric ring with the proposed subunit order MCM2-MCM6-MCM4-MCM7-MCM3-MCM5. Component of the CMG helicase complex, a hexameric ring of related MCM2-7 subunits stabilized by CDC45 and the tetrameric GINS complex. Interacts with MCMBP. In terms of processing, sumoylated; SUMO2 modified in response to stress caused by inhibition of proteasome activity (in vitro).

The protein localises to the nucleus. It localises to the chromosome. The catalysed reaction is ATP + H2O = ADP + phosphate + H(+). Acts as a component of the MCM2-7 complex (MCM complex) which is the replicative helicase essential for 'once per cell cycle' DNA replication initiation and elongation in eukaryotic cells. Core component of CDC45-MCM-GINS (CMG) helicase, the molecular machine that unwinds template DNA during replication, and around which the replisome is built. The active ATPase sites in the MCM2-7 ring are formed through the interaction surfaces of two neighboring subunits such that a critical structure of a conserved arginine finger motif is provided in trans relative to the ATP-binding site of the Walker A box of the adjacent subunit. The six ATPase active sites, however, are likely to contribute differentially to the complex helicase activity. This Homo sapiens (Human) protein is DNA replication licensing factor MCM4.